Consider the following 222-residue polypeptide: MGSTVAAALLLFLAAVPAVFAATFKVGDISGWTSNLDYTVWLTGKTFRVGDTLEFVYGLSHSVSVVDKAGYDNCDSSGATQNFADGDTKIDLTTVGTMHFLCPTFGHCKNGMKLAVPVLAAAPSPSTPSSPPSTPSTPSSPPSTPSTPSSPPSPPSPPSPSLPPSSLPPSASPPTNGTPDSETLTPPPAPLPPSLSPNAASKGVMSYGIIGVTMILMYAVMT.

A signal peptide spans 1–21 (MGSTVAAALLLFLAAVPAVFA). The 99-residue stretch at 22 to 120 (ATFKVGDISG…GMKLAVPVLA (99 aa)) folds into the Phytocyanin domain. H61, C102, H107, and M112 together coordinate Cu cation. An intrachain disulfide couples C74 to C108. The segment at 121–198 (AAPSPSTPSS…APLPPSLSPN (78 aa)) is disordered. 2 stretches are compositionally biased toward pro residues: residues 125–172 (PSTP…PSAS) and 185–195 (TPPPAPLPPSL). N198 is lipidated: GPI-anchor amidated asparagine. A propeptide spans 199 to 222 (AASKGVMSYGIIGVTMILMYAVMT) (removed in mature form).

Its subcellular location is the cell membrane. Probably acts as an electron carrier involved in oxygen activation and/or lignin formation. The chain is Uclacyanin-3 (UCC3) from Arabidopsis thaliana (Mouse-ear cress).